The primary structure comprises 59 residues: Conorfamide-Ep1 (59 aa).

The N-terminal stretch at M1–A19 is a signal peptide. Residues T20–K25 constitute a propeptide that is removed on maturation. Isoleucine amide is present on I43. The propeptide occupies R45–F59.

This sequence belongs to the FARP (FMRFamide related peptide) family. As to expression, expressed by the venom duct.

Its subcellular location is the secreted. Neurotoxin that is active on vertebrates. When tested at high doses (10 uM), the toxin affects all zebrafish and mouse DRG neurons in culture, which could be an indication of an effect on a widely expressed receptor or ion channel found in both species. At low doses (1 uM), the effects of the toxin are confined to a specific subpopulation of zebrafish and mouse DRG neurons. In vivo, it induces long-lasting dramatic alterations in the locomotor behavior of zebrafish larvae. It rapidly induces hypoactivity and death of larvae at high doses and it causes hyperactivity at lower doses. In zebrafish adults, intramuscular injection causes the decrease of the movements and visited spaces. In mice, intracranial injection causes lethargy and prolonges sleeping phases and reduced movement. This chain is Conorfamide-Ep1, found in Conus episcopatus (Bishop's cone).